The chain runs to 298 residues: Ribosomal protein L11 methyltransferase (298 aa).

S-adenosyl-L-methionine is bound by residues T148, G169, D191, and N233.

The protein belongs to the methyltransferase superfamily. PrmA family.

It localises to the cytoplasm. It catalyses the reaction L-lysyl-[protein] + 3 S-adenosyl-L-methionine = N(6),N(6),N(6)-trimethyl-L-lysyl-[protein] + 3 S-adenosyl-L-homocysteine + 3 H(+). Methylates ribosomal protein L11. The protein is Ribosomal protein L11 methyltransferase of Marinobacter nauticus (strain ATCC 700491 / DSM 11845 / VT8) (Marinobacter aquaeolei).